The primary structure comprises 338 residues: Nucleoid-associated protein PA14_59050 (338 aa).

Belongs to the YejK family.

It is found in the cytoplasm. Its subcellular location is the nucleoid. In Pseudomonas aeruginosa (strain UCBPP-PA14), this protein is Nucleoid-associated protein PA14_59050.